Consider the following 186-residue polypeptide: Elongation factor P (186 aa).

The protein belongs to the elongation factor P family.

The protein localises to the cytoplasm. Its pathway is protein biosynthesis; polypeptide chain elongation. In terms of biological role, involved in peptide bond synthesis. Stimulates efficient translation and peptide-bond synthesis on native or reconstituted 70S ribosomes in vitro. Probably functions indirectly by altering the affinity of the ribosome for aminoacyl-tRNA, thus increasing their reactivity as acceptors for peptidyl transferase. The protein is Elongation factor P of Ruminiclostridium cellulolyticum (strain ATCC 35319 / DSM 5812 / JCM 6584 / H10) (Clostridium cellulolyticum).